A 937-amino-acid polypeptide reads, in one-letter code: DNA mismatch repair protein msh-2 (937 aa).

ATP is bound at residue Gly659 to Ser666.

This sequence belongs to the DNA mismatch repair MutS family. As to quaternary structure, heterodimer of msh2 and msh6.

It is found in the nucleus. In terms of biological role, involved in post-replicative DNA-mismatch repair. Binds to mismatch-containing DNA. This is DNA mismatch repair protein msh-2 (msh-2) from Neurospora crassa (strain ATCC 24698 / 74-OR23-1A / CBS 708.71 / DSM 1257 / FGSC 987).